The primary structure comprises 1812 residues: Putative surface cell antigen sca2 (1812 aa).

Positions Met-1–Ala-17 are cleaved as a signal peptide. Composition is skewed to polar residues over residues Phe-344–Arg-357 and Met-371–Ser-382. Disordered regions lie at residues Phe-344–Ser-382, Leu-648–Ser-691, and Lys-1338–Val-1462. Over residues Pro-656–Leu-685 the composition is skewed to pro residues. 2 stretches are compositionally biased toward basic and acidic residues: residues Ser-1349 to Asp-1367 and Ser-1382 to Ser-1393. Residues Asp-1401–Glu-1416 are compositionally biased toward acidic residues. Low complexity predominate over residues Ser-1417–Asn-1455. Positions Glu-1533–Leu-1812 constitute an Autotransporter domain.

The protein resides in the cell outer membrane. The protein is Putative surface cell antigen sca2 (sca2) of Rickettsia sibirica (strain ATCC VR-151 / 246).